Here is an 87-residue protein sequence, read N- to C-terminus: Diazepam-binding inhibitor-like 5 (87 aa).

The region spanning 2-87 (SQVEFEMACA…VEELKKKEPC (86 aa)) is the ACB domain. An acyl-CoA is bound by residues 29-33 (YSFYK), Lys55, and Tyr74.

This sequence belongs to the ACBP family. In terms of tissue distribution, exclusively expressed in late spermatids and spermatozoa. Not found in epididymis, spleen, bone marrow, skin, liver, brain, heart, kidney, muscle.

The protein resides in the cytoplasm. Functionally, may be involved in the energy metabolism of the mature sperm. This chain is Diazepam-binding inhibitor-like 5 (Dbil5), found in Mus musculus (Mouse).